Here is a 171-residue protein sequence, read N- to C-terminus: UPF0303 protein YPTS_2661 (171 aa).

Belongs to the UPF0303 family.

This is UPF0303 protein YPTS_2661 from Yersinia pseudotuberculosis serotype IB (strain PB1/+).